The following is a 510-amino-acid chain: NAD(P)H-quinone oxidoreductase subunit 2 A, chloroplastic (510 aa).

Helical transmembrane passes span 24-44 (LLLF…GLIL), 57-77 (IPWL…ALLF), 99-119 (IFQF…VEYI), 124-144 (MAIT…MFLC), 149-169 (LITI…LSGY), 183-203 (YLLM…WLYG), 227-247 (PGIS…LSPA), 295-315 (WHLL…LIAI), 323-343 (MLAY…IVGD), 354-374 (YMLF…LFGL), 395-415 (ALSL…AGFF), 418-438 (LYLF…IGLL), and 484-504 (MIVC…IIAI).

The protein belongs to the complex I subunit 2 family. NDH is composed of at least 16 different subunits, 5 of which are encoded in the nucleus.

It localises to the plastid. The protein localises to the chloroplast thylakoid membrane. The catalysed reaction is a plastoquinone + NADH + (n+1) H(+)(in) = a plastoquinol + NAD(+) + n H(+)(out). It carries out the reaction a plastoquinone + NADPH + (n+1) H(+)(in) = a plastoquinol + NADP(+) + n H(+)(out). NDH shuttles electrons from NAD(P)H:plastoquinone, via FMN and iron-sulfur (Fe-S) centers, to quinones in the photosynthetic chain and possibly in a chloroplast respiratory chain. The immediate electron acceptor for the enzyme in this species is believed to be plastoquinone. Couples the redox reaction to proton translocation, and thus conserves the redox energy in a proton gradient. The polypeptide is NAD(P)H-quinone oxidoreductase subunit 2 A, chloroplastic (Solanum lycopersicum (Tomato)).